Consider the following 196-residue polypeptide: MNYWIQHRLNCLEQAFNPKYCRALEHTIGIVARQFKAGNKLLICGNGGSAADAQHIAAEFVGRFQLHRKGLPAIALGTNPATLTAWSNDYEFETVFARQVEAFAQPGDILWGISTSGKSANVIRAMEMAKDLGLLTIGMAGNNGGMLKDLTDYPLFVSEYHTPYIQEIHLITYHRICEQVEAQLFAKAGLEAQIAV.

One can recognise an SIS domain in the interval 31-196 (VARQFKAGNK…KAGLEAQIAV (166 aa)). 46–48 (NGG) contacts substrate. Residues His-55 and Glu-59 each coordinate Zn(2+). Residues Glu-59, 88-89 (ND), 114-116 (STS), Ser-119, and Gln-166 contribute to the substrate site. Residues Gln-166 and His-174 each coordinate Zn(2+).

This sequence belongs to the SIS family. GmhA subfamily. It depends on Zn(2+) as a cofactor.

The protein localises to the cytoplasm. The enzyme catalyses 2 D-sedoheptulose 7-phosphate = D-glycero-alpha-D-manno-heptose 7-phosphate + D-glycero-beta-D-manno-heptose 7-phosphate. It participates in carbohydrate biosynthesis; D-glycero-D-manno-heptose 7-phosphate biosynthesis; D-glycero-alpha-D-manno-heptose 7-phosphate and D-glycero-beta-D-manno-heptose 7-phosphate from sedoheptulose 7-phosphate: step 1/1. Catalyzes the isomerization of sedoheptulose 7-phosphate in D-glycero-D-manno-heptose 7-phosphate. This is Phosphoheptose isomerase from Crocosphaera subtropica (strain ATCC 51142 / BH68) (Cyanothece sp. (strain ATCC 51142)).